We begin with the raw amino-acid sequence, 86 residues long: Anti-adapter protein IraP (86 aa).

Residues 1-36 (MKNLIAELLFKLAQKEEESKELCAQVEALEIIVTAM) are a coiled coil.

This sequence belongs to the IraP family. In terms of assembly, interacts with RssB.

The protein resides in the cytoplasm. Inhibits RpoS proteolysis by regulating RssB activity, thereby increasing the stability of the sigma stress factor RpoS especially during phosphate starvation, but also in stationary phase and during nitrogen starvation. Its effect on RpoS stability is due to its interaction with RssB, which probably blocks the interaction of RssB with RpoS, and the consequent delivery of the RssB-RpoS complex to the ClpXP protein degradation pathway. This Escherichia coli O7:K1 (strain IAI39 / ExPEC) protein is Anti-adapter protein IraP.